The chain runs to 199 residues: Chaperone protein TorD (199 aa).

This sequence belongs to the TorD/DmsD family. TorD subfamily.

It is found in the cytoplasm. Involved in the biogenesis of TorA. Acts on TorA before the insertion of the molybdenum cofactor and, as a result, probably favors a conformation of the apoenzyme that is competent for acquiring the cofactor. In Shigella dysenteriae serotype 1 (strain Sd197), this protein is Chaperone protein TorD.